We begin with the raw amino-acid sequence, 25 residues long: Pregnancy-associated glycoprotein 74 (25 aa).

N-linked (GlcNAc...) asparagine glycans are attached at residues Asn-4 and Asn-21.

Belongs to the peptidase A1 family. Post-translationally, N-glycosylated. As to expression, placental cotyledons.

It localises to the secreted. The protein resides in the extracellular space. This chain is Pregnancy-associated glycoprotein 74, found in Bison bison (American bison).